We begin with the raw amino-acid sequence, 2278 residues long: Protein Ycf2 (2278 aa).

Glycine 1632 to serine 1639 lines the ATP pocket.

Belongs to the Ycf2 family.

It localises to the plastid. The protein resides in the chloroplast stroma. Its function is as follows. Probable ATPase of unknown function. Its presence in a non-photosynthetic plant (Epifagus virginiana) and experiments in tobacco indicate that it has an essential function which is probably not related to photosynthesis. In Solanum tuberosum (Potato), this protein is Protein Ycf2.